Reading from the N-terminus, the 340-residue chain is NADH-quinone oxidoreductase subunit H (340 aa).

9 helical membrane-spanning segments follow: residues 3 to 23, 69 to 89, 102 to 122, 127 to 147, 154 to 174, 186 to 206, 248 to 268, 274 to 294, and 312 to 332; these read LVGMVALMVGVLVSVAYLVYM, WAFFAAPVITFALALAGWAVI, VVVMPYVVADLNLGVLYVLAI, VYGIIMAGWASGSNYAFLGAI, ISYEMSMGLVMLSVSLCAGSL, MPYWMDLLLLPMAGVFFVSML, ILVSAMMVVLFLGGWYPPLNI, IPGFVWFCSKVFLLLFCFIWV, and KVFLPFSFVWVMVISGVLLWV.

This sequence belongs to the complex I subunit 1 family. As to quaternary structure, NDH-1 is composed of 14 different subunits. Subunits NuoA, H, J, K, L, M, N constitute the membrane sector of the complex.

Its subcellular location is the cell inner membrane. It catalyses the reaction a quinone + NADH + 5 H(+)(in) = a quinol + NAD(+) + 4 H(+)(out). Functionally, NDH-1 shuttles electrons from NADH, via FMN and iron-sulfur (Fe-S) centers, to quinones in the respiratory chain. The immediate electron acceptor for the enzyme in this species is believed to be ubiquinone. Couples the redox reaction to proton translocation (for every two electrons transferred, four hydrogen ions are translocated across the cytoplasmic membrane), and thus conserves the redox energy in a proton gradient. This subunit may bind ubiquinone. The sequence is that of NADH-quinone oxidoreductase subunit H from Anaplasma phagocytophilum (strain HZ).